Reading from the N-terminus, the 158-residue chain is NAD(P)H-quinone oxidoreductase subunit N (158 aa).

This sequence belongs to the complex I NdhN subunit family. As to quaternary structure, NDH-1 can be composed of about 15 different subunits; different subcomplexes with different compositions have been identified which probably have different functions.

It localises to the cellular thylakoid membrane. It carries out the reaction a plastoquinone + NADH + (n+1) H(+)(in) = a plastoquinol + NAD(+) + n H(+)(out). The catalysed reaction is a plastoquinone + NADPH + (n+1) H(+)(in) = a plastoquinol + NADP(+) + n H(+)(out). Its function is as follows. NDH-1 shuttles electrons from an unknown electron donor, via FMN and iron-sulfur (Fe-S) centers, to quinones in the respiratory and/or the photosynthetic chain. The immediate electron acceptor for the enzyme in this species is believed to be plastoquinone. Couples the redox reaction to proton translocation, and thus conserves the redox energy in a proton gradient. Cyanobacterial NDH-1 also plays a role in inorganic carbon-concentration. This chain is NAD(P)H-quinone oxidoreductase subunit N, found in Trichodesmium erythraeum (strain IMS101).